Here is a 480-residue protein sequence, read N- to C-terminus: Proline--tRNA ligase (480 aa).

Belongs to the class-II aminoacyl-tRNA synthetase family. ProS type 3 subfamily. In terms of assembly, homodimer.

The protein resides in the cytoplasm. The catalysed reaction is tRNA(Pro) + L-proline + ATP = L-prolyl-tRNA(Pro) + AMP + diphosphate. Its function is as follows. Catalyzes the attachment of proline to tRNA(Pro) in a two-step reaction: proline is first activated by ATP to form Pro-AMP and then transferred to the acceptor end of tRNA(Pro). The protein is Proline--tRNA ligase of Roseiflexus sp. (strain RS-1).